The following is a 684-amino-acid chain: DNA helicase IV (684 aa).

In terms of domain architecture, UvrD-like helicase ATP-binding spans 195–505 (SPLNPAQARA…CDLDTTYRFN (311 aa)). ATP contacts are provided by residues 216-223 (AGAGSGKT) and arginine 503.

Belongs to the helicase family. UvrD subfamily.

The enzyme catalyses Couples ATP hydrolysis with the unwinding of duplex DNA by translocating in the 3'-5' direction.. The catalysed reaction is ATP + H2O = ADP + phosphate + H(+). Functionally, helicase IV catalyzes the unwinding of duplex DNA in the 3' to 5' direction with respect to the bound single strand in a reaction that is dependent upon the hydrolysis of ATP. This is DNA helicase IV (helD) from Escherichia coli (strain K12).